A 162-amino-acid chain; its full sequence is Regulatory protein RecX (162 aa).

This sequence belongs to the RecX family.

It is found in the cytoplasm. Its function is as follows. Modulates RecA activity. The chain is Regulatory protein RecX from Pectobacterium atrosepticum (strain SCRI 1043 / ATCC BAA-672) (Erwinia carotovora subsp. atroseptica).